The chain runs to 410 residues: LL-diaminopimelate aminotransferase (410 aa).

Substrate is bound by residues tyrosine 15 and glycine 42. Pyridoxal 5'-phosphate is bound by residues tyrosine 72, alanine 108–lysine 109, tyrosine 132, asparagine 187, tyrosine 218, and serine 246–serine 248. Residues lysine 109, tyrosine 132, and asparagine 187 each contribute to the substrate site. Position 249 is an N6-(pyridoxal phosphate)lysine (lysine 249). Pyridoxal 5'-phosphate is bound by residues arginine 257 and asparagine 292. Residues asparagine 292 and arginine 388 each contribute to the substrate site.

The protein belongs to the class-I pyridoxal-phosphate-dependent aminotransferase family. LL-diaminopimelate aminotransferase subfamily. Homodimer. Requires pyridoxal 5'-phosphate as cofactor.

The enzyme catalyses (2S,6S)-2,6-diaminopimelate + 2-oxoglutarate = (S)-2,3,4,5-tetrahydrodipicolinate + L-glutamate + H2O + H(+). Its pathway is amino-acid biosynthesis; L-lysine biosynthesis via DAP pathway; LL-2,6-diaminopimelate from (S)-tetrahydrodipicolinate (aminotransferase route): step 1/1. In terms of biological role, involved in the synthesis of meso-diaminopimelate (m-DAP or DL-DAP), required for both lysine and peptidoglycan biosynthesis. Catalyzes the direct conversion of tetrahydrodipicolinate to LL-diaminopimelate. Is also able to catalyze the reverse reaction in vitro, i.e. the transamination of LL-diaminopimelate with 2-oxoglutarate to produce 2-oxo-6-aminopimelate (in equilibrium with tetrahydrodipicolinate) and glutamate. Has maximal aminotransferase activity using 2-oxoglutarate as an amino group acceptor, and cannot use oxaloacetate instead of 2-oxoglutarate, although 2-oxoadipate can substitute with 21% relative activity. Cannot use m-DAP, lysine or ornithine as the amino-group donor, when using 2-oxoglutarate as the amino-group acceptor. The sequence is that of LL-diaminopimelate aminotransferase from Methanothermobacter thermautotrophicus (strain ATCC 29096 / DSM 1053 / JCM 10044 / NBRC 100330 / Delta H) (Methanobacterium thermoautotrophicum).